We begin with the raw amino-acid sequence, 94 residues long: Integration host factor subunit beta (94 aa).

It belongs to the bacterial histone-like protein family. In terms of assembly, heterodimer of an alpha and a beta chain.

Functionally, this protein is one of the two subunits of integration host factor, a specific DNA-binding protein that functions in genetic recombination as well as in transcriptional and translational control. The protein is Integration host factor subunit beta of Pectobacterium atrosepticum (strain SCRI 1043 / ATCC BAA-672) (Erwinia carotovora subsp. atroseptica).